Here is a 426-residue protein sequence, read N- to C-terminus: Glutamate-1-semialdehyde 2,1-aminomutase 2 (426 aa).

An N6-(pyridoxal phosphate)lysine modification is found at lysine 265.

Belongs to the class-III pyridoxal-phosphate-dependent aminotransferase family. HemL subfamily. As to quaternary structure, homodimer. Pyridoxal 5'-phosphate serves as cofactor.

The protein resides in the cytoplasm. The enzyme catalyses (S)-4-amino-5-oxopentanoate = 5-aminolevulinate. The protein operates within porphyrin-containing compound metabolism; protoporphyrin-IX biosynthesis; 5-aminolevulinate from L-glutamyl-tRNA(Glu): step 2/2. The sequence is that of Glutamate-1-semialdehyde 2,1-aminomutase 2 from Lachnoclostridium phytofermentans (strain ATCC 700394 / DSM 18823 / ISDg) (Clostridium phytofermentans).